Reading from the N-terminus, the 350-residue chain is S-adenosylmethionine:tRNA ribosyltransferase-isomerase (350 aa).

The protein belongs to the QueA family. As to quaternary structure, monomer.

The protein localises to the cytoplasm. The catalysed reaction is 7-aminomethyl-7-carbaguanosine(34) in tRNA + S-adenosyl-L-methionine = epoxyqueuosine(34) in tRNA + adenine + L-methionine + 2 H(+). Its pathway is tRNA modification; tRNA-queuosine biosynthesis. In terms of biological role, transfers and isomerizes the ribose moiety from AdoMet to the 7-aminomethyl group of 7-deazaguanine (preQ1-tRNA) to give epoxyqueuosine (oQ-tRNA). The polypeptide is S-adenosylmethionine:tRNA ribosyltransferase-isomerase (Aliivibrio fischeri (strain ATCC 700601 / ES114) (Vibrio fischeri)).